Consider the following 453-residue polypeptide: MSQSPKVGFVSLGCPKALVDSEQIITQLRAEGYEISGSYDGADLVVVNTCGFIDEAVQESLDAIGEALTENGKVIVTGCLGAKSSASGSNLIEEVHPKVLAVTGPHAVGEVMQAVHSHLPKPHDPFVDLVPAAGIKLTPRHYAYLKISEGCNHRCTFCIIPSMRGDLVSRPVAEVMLEAENLFKSGVKELLVISQDTSAYGVDVKYRTGFWNGKPIKTRMTDLVAALGELAAQYGAWVRLHYVYPYPSVDEVIPLMAEGPFKGHVLPYLDVPFQHAHPEVLKRMKRPANAEKVLERVQKWREICPDLTIRSTFIAGFPGETEEQFETLLDFIREAELDRVGCFAYSPVEGATANDLDGALPDEVREERRARFMEVAEEVSANRMQRKIGKTLKVLIDEVSAEGGIGRTAADAPEIDGVVYVEPAAKASKRYKVGDFVSVKITGADGHDLWGEV.

Residues 5–120 enclose the MTTase N-terminal domain; sequence PKVGFVSLGC…VMQAVHSHLP (116 aa). 6 residues coordinate [4Fe-4S] cluster: cysteine 14, cysteine 50, cysteine 79, cysteine 151, cysteine 155, and cysteine 158. Residues 137-382 enclose the Radical SAM core domain; that stretch reads LTPRHYAYLK…MEVAEEVSAN (246 aa). Residues 385–453 enclose the TRAM domain; it reads QRKIGKTLKV…ADGHDLWGEV (69 aa).

It belongs to the methylthiotransferase family. RimO subfamily. The cofactor is [4Fe-4S] cluster.

The protein localises to the cytoplasm. It catalyses the reaction L-aspartate(89)-[ribosomal protein uS12]-hydrogen + (sulfur carrier)-SH + AH2 + 2 S-adenosyl-L-methionine = 3-methylsulfanyl-L-aspartate(89)-[ribosomal protein uS12]-hydrogen + (sulfur carrier)-H + 5'-deoxyadenosine + L-methionine + A + S-adenosyl-L-homocysteine + 2 H(+). In terms of biological role, catalyzes the methylthiolation of an aspartic acid residue of ribosomal protein uS12. The sequence is that of Ribosomal protein uS12 methylthiotransferase RimO from Burkholderia orbicola (strain MC0-3).